We begin with the raw amino-acid sequence, 451 residues long: CCAAT/enhancer-binding protein (451 aa).

Disordered stretches follow at residues 210–236 (TYNNHSSDENSSVGSDSSSTIKEEPID), 267–298 (QSNNLSNNNSSSNNSSNNSSNNSSNSNTNSTN), and 328–389 (LKHH…AKVR). Low complexity-rich tracts occupy residues 218-228 (ENSSVGSDSSS), 268-298 (SNNLSNNNSSSNNSSNNSSNNSSNSNTNSTN), and 334-350 (LQQTQQQHAQQQQQHAQ). Residues 359-370 (KHVDKGTEEYRR) show a composition bias toward basic and acidic residues. Residues 365 to 428 (TEEYRRRRER…SLHKQIYMQL (64 aa)) enclose the bZIP domain. Residues 369-398 (RRRRERNNIAVRKSREKAKVRSKEVEERVK) form a basic motif region. The interval 400–407 (LLKEKDAL) is leucine-zipper.

This sequence belongs to the bZIP family. C/EBP subfamily. Binds DNA as a dimer and can form stable heterodimers.

It localises to the nucleus. Its function is as follows. May be required for the expression of gene products mediating border cell migration. Among the DNA sequences that this protein binds with high affinity is a conserved site within the promoter of its gene. This Drosophila virilis (Fruit fly) protein is CCAAT/enhancer-binding protein (slbo).